Reading from the N-terminus, the 206-residue chain is Large ribosomal subunit protein uL4 (206 aa).

The protein belongs to the universal ribosomal protein uL4 family. Part of the 50S ribosomal subunit.

In terms of biological role, one of the primary rRNA binding proteins, this protein initially binds near the 5'-end of the 23S rRNA. It is important during the early stages of 50S assembly. It makes multiple contacts with different domains of the 23S rRNA in the assembled 50S subunit and ribosome. Functionally, forms part of the polypeptide exit tunnel. In Rhodopseudomonas palustris (strain BisA53), this protein is Large ribosomal subunit protein uL4.